The chain runs to 222 residues: Urease accessory protein UreF (222 aa).

Belongs to the UreF family. UreD, UreF and UreG form a complex that acts as a GTP-hydrolysis-dependent molecular chaperone, activating the urease apoprotein by helping to assemble the nickel containing metallocenter of UreC. The UreE protein probably delivers the nickel.

The protein localises to the cytoplasm. Functionally, required for maturation of urease via the functional incorporation of the urease nickel metallocenter. The protein is Urease accessory protein UreF of Roseobacter denitrificans (strain ATCC 33942 / OCh 114) (Erythrobacter sp. (strain OCh 114)).